Consider the following 173-residue polypeptide: Lithostathine-2 (173 aa).

The N-terminal stretch at 1–22 (MAQNNVYLILFLCLMFLSYSQG) is a signal peptide. The 131-residue stretch at 41-171 (INCPEGANAY…EAQYSFVCKF (131 aa)) folds into the C-type lectin domain. Disulfide bonds link C43–C54, C71–C169, and C144–C161.

In terms of tissue distribution, expressed only in regenerating islets and normal exocrine pancreas, but not in normal pancreatic islets. Expressed strongly in pancreas, weakly in liver, but not at all in gall bladder.

It is found in the secreted. In terms of biological role, might act as an inhibitor of spontaneous calcium carbonate precipitation. The polypeptide is Lithostathine-2 (Reg2) (Mus musculus (Mouse)).